The following is a 689-amino-acid chain: Glycine--tRNA ligase beta subunit (689 aa).

Belongs to the class-II aminoacyl-tRNA synthetase family. As to quaternary structure, tetramer of two alpha and two beta subunits.

The protein resides in the cytoplasm. It catalyses the reaction tRNA(Gly) + glycine + ATP = glycyl-tRNA(Gly) + AMP + diphosphate. This Shewanella baltica (strain OS155 / ATCC BAA-1091) protein is Glycine--tRNA ligase beta subunit.